The primary structure comprises 295 residues: Malonyl-[acyl-carrier protein] O-methyltransferase (295 aa).

It belongs to the methyltransferase superfamily.

The catalysed reaction is malonyl-[ACP] + S-adenosyl-L-methionine = malonyl-[ACP] methyl ester + S-adenosyl-L-homocysteine. The protein operates within cofactor biosynthesis; biotin biosynthesis. Its function is as follows. Converts the free carboxyl group of a malonyl-thioester to its methyl ester by transfer of a methyl group from S-adenosyl-L-methionine (SAM). It allows to synthesize pimeloyl-ACP via the fatty acid synthetic pathway. This is Malonyl-[acyl-carrier protein] O-methyltransferase from Xylella fastidiosa (strain M23).